Consider the following 58-residue polypeptide: U-scoloptoxin(14)-Sa1a (58 aa).

The signal sequence occupies residues 1 to 18; the sequence is MNRILGMIFLFCLISCYA.

This sequence belongs to the scoloptoxin-14 family. Contains 4 disulfide bonds. In terms of tissue distribution, expressed by the venom gland.

It is found in the secreted. The chain is U-scoloptoxin(14)-Sa1a from Scolopendra alternans (Florida Keys giant centipede).